A 107-amino-acid polypeptide reads, in one-letter code: U1-lycotoxin-Ls1p (107 aa).

An N-terminal signal peptide occupies residues 1–20 (MMKVLVVVALLVTLISYSSS). Positions 21 to 41 (EGIDDLEADELLSLMANEQTR) are excised as a propeptide. Cystine bridges form between C44–C59, C51–C68, C58–C86, and C70–C84.

It belongs to the neurotoxin 19 (CSTX) family. 04 (U1-Lctx) subfamily. In terms of tissue distribution, expressed by the venom gland.

It localises to the secreted. In Lycosa singoriensis (Wolf spider), this protein is U1-lycotoxin-Ls1p.